Reading from the N-terminus, the 381-residue chain is Tafazzin (381 aa).

Over 1–25 (MSFRDVLERGDEFLEAYPRRSPLWR) the chain is Mitochondrial intermembrane. Residues 26–47 (FLSYSTSLLTFGVSKLLLFTCY) lie within the membrane without spanning it. Topologically, residues 48-381 (NVKLNGFEKL…PEGKPKGKDD (334 aa)) are mitochondrial intermembrane. Residues 77–82 (HMSMVD) carry the HXXXXD motif motif. Positions 215 to 232 (LEATKPPIVVPIFATGFE) are required for membrane insertion.

It belongs to the taffazin family.

The protein localises to the mitochondrion outer membrane. Its subcellular location is the mitochondrion inner membrane. The catalysed reaction is 1'-[1,2-diacyl-sn-glycero-3-phospho],3'-[1-acyl-sn-glycero-3-phospho]-glycerol + a 1,2-diacyl-sn-glycero-3-phosphocholine = a cardiolipin + a 1-acyl-sn-glycero-3-phosphocholine. It carries out the reaction 1,2-di-(9Z,12Z-octadecadienoyl)-sn-glycero-3-phosphocholine + 1'-[1,2-di-(9Z,12Z-octadecadienoyl)-sn-glycero-3-phospho]-3'-[1-(9Z,12Z-octadecadienoyl)-sn-glycero-3-phospho]-glycerol = 1-(9Z,12Z)-octadecadienoyl-sn-glycero-3-phosphocholine + 1',3'-bis-[1,2-di-(9Z,12Z-octadecadienoyl)-sn-glycero-3-phospho]-glycerol. The enzyme catalyses 1'-[1,2-di-(9Z-octadecenoyl)-sn-glycero-3-phospho]-3'-[1-(9Z-octadecenoyl)-2-hexadecanoyl-sn-glycero-3-phospho]-glycerol + 1-hexadecanoyl-sn-glycero-3-phosphocholine = 1'-[1,2-di-(9Z-octadecenoyl)-sn-glycero-3-phospho]-3'-[1-(9Z-octadecenoyl)-sn-glycero-3-phospho]-glycerol + 1,2-dihexadecanoyl-sn-glycero-3-phosphocholine. It catalyses the reaction 1'-[1,2-di-(9Z-octadecenoyl)-sn-glycero-3-phospho]-3'-[1-(9Z-octadecenoyl)-2-(9Z-hexadecenoyl)-sn-glycero-3-phospho]-glycerol + 1-(9Z-hexadecenoyl)-sn-glycero-3-phosphocholine = 1,2-di-(9Z-hexadecenoyl)-sn-glycero-3-phosphocholine + 1'-[1,2-di-(9Z-octadecenoyl)-sn-glycero-3-phospho]-3'-[1-(9Z-octadecenoyl)-sn-glycero-3-phospho]-glycerol. The catalysed reaction is 1',3'-bis[1,2-di-(9Z-octadecenoyl)-sn-glycero-3-phospho]-glycerol + 1-(9Z-octadecenoyl)-sn-glycero-3-phosphocholine = 1'-[1,2-di-(9Z-octadecenoyl)-sn-glycero-3-phospho]-3'-[1-(9Z-octadecenoyl)-sn-glycero-3-phospho]-glycerol + 1,2-di-(9Z-octadecenoyl)-sn-glycero-3-phosphocholine. It carries out the reaction 1'-[1,2-di-(9Z-octadecenoyl)-sn-glycero-3-phospho]-3'-[1-(9Z-octadecenoyl)-2-(9Z,12Z-octadecadienoyl)-sn-glycero-3-phospho]-glycerol + 1-(9Z,12Z)-octadecadienoyl-sn-glycero-3-phosphocholine = 1,2-di-(9Z,12Z-octadecadienoyl)-sn-glycero-3-phosphocholine + 1'-[1,2-di-(9Z-octadecenoyl)-sn-glycero-3-phospho]-3'-[1-(9Z-octadecenoyl)-sn-glycero-3-phospho]-glycerol. The enzyme catalyses 1'-[1,2-di-(9Z-octadecenoyl)-sn-glycero-3-phospho]-3'-[1-(9Z-octadecenoyl)-2-(9Z-hexadecenoyl)-sn-glycero-3-phospho]-glycerol + 1-hexadecanoyl-sn-glycero-3-phosphocholine = 1-hexadecanoyl-2-(9Z-hexadecenoyl)-sn-glycero-3-phosphocholine + 1'-[1,2-di-(9Z-octadecenoyl)-sn-glycero-3-phospho]-3'-[1-(9Z-octadecenoyl)-sn-glycero-3-phospho]-glycerol. It catalyses the reaction 1'-[1,2-di-(9Z-octadecenoyl)-sn-glycero-3-phospho]-3'-[1-(9Z-octadecenoyl)-2-hexadecanoyl-sn-glycero-3-phospho]-glycerol + 1-(9Z-hexadecenoyl)-sn-glycero-3-phosphocholine = 1-(9Z-hexadecenoyl)-2-hexadecanoyl-sn-glycero-3-phosphocholine + 1'-[1,2-di-(9Z-octadecenoyl)-sn-glycero-3-phospho]-3'-[1-(9Z-octadecenoyl)-sn-glycero-3-phospho]-glycerol. The catalysed reaction is 2 1'-[1,2-diacyl-sn-glycero-3-phospho],3'-[1-acyl-sn-glycero-3-phospho]-glycerol = 1',3'-bis-[1-acyl-sn-glycero-3-phospho]-glycerol + a cardiolipin. It carries out the reaction 2 1'-[1,2-di-(9Z-octadecenoyl)-sn-glycero-3-phospho]-3'-[1-(9Z-octadecenoyl)-sn-glycero-3-phospho]-glycerol = 1',3'-bis-[1-(9Z-octadecenoyl)-sn-glycero-3-phospho]-glycerol + 1',3'-bis[1,2-di-(9Z-octadecenoyl)-sn-glycero-3-phospho]-glycerol. The enzyme catalyses 1,2-di-(9Z-hexadecenoyl)-sn-glycero-3-phosphocholine + 1-hexadecanoyl-sn-glycero-3-phosphocholine = 1-hexadecanoyl-2-(9Z-hexadecenoyl)-sn-glycero-3-phosphocholine + 1-(9Z-hexadecenoyl)-sn-glycero-3-phosphocholine. It catalyses the reaction 1'-[1,2-di-(9Z,12Z-octadecadienoyl)-sn-glycero-3-phospho]-3'-[1-(9Z,12Z-octadecadienoyl)-sn-glycero-3-phospho]-glycerol + 1,2-di-(9Z-octadecenoyl)-sn-glycero-3-phosphocholine = 1'-[1,2-di-(9Z,12Z-octadecadienoyl)-sn-glycero-3-phospho]-3'-[1-(9Z,12Z-octadecadienoyl)-2-(9Z-octadecenoyl)-sn-glycero-3-phospho]-glycerol + 1-(9Z-octadecenoyl)-sn-glycero-3-phosphocholine. It participates in phospholipid metabolism. Its function is as follows. Acyltransferase required to remodel newly synthesized phospholipid cardiolipin (1',3'-bis-[1,2-diacyl-sn-glycero-3-phospho]-glycerol or CL), a key component of the mitochondrial inner membrane, with tissue specific acyl chains necessary for adequate mitochondrial function. Its role in cellular physiology is to improve mitochondrial performance. CL is critical for the coassembly of lipids and proteins in mitochondrial membranes, for instance, remodeling of the acyl groups of CL in the mitochondrial inner membrane affects the assembly and stability of respiratory chain complex IV and its supercomplex forms. Catalyzes the transacylation between phospholipids and lysophospholipids, with the highest rate being between phosphatidylcholine (1,2-diacyl-sn-glycero-3-phosphocholine or PC) and CL. Catalyzes both 1-acyl-sn-glycero-3-phosphocholine (lysophosphatidylcholine or LPC) reacylation and PC-CL transacylation, that means, it exchanges acyl groups between CL and PC by a combination of forward and reverse transacylations. Also catalyzes transacylations between other phospholipids such as phosphatidylethanolamine (1,2-diacyl-sn-glycero-3-phosphoethanolamine or PE) and CL, between PC and PE, and between PC and phosphatidate (1,2-diacyl-sn-glycero-3-phosphate or PA), although at lower rate. Not regiospecific, it transfers acyl groups into any of the sn-1 and sn-2 positions of the monolysocardiolipin (MLCL), which is an important prerequisite for uniformity and symmetry in CL acyl distribution. Cannot transacylate dilysocardiolipin (DLCL), thus, the role of MLCL is limited to that of an acyl acceptor. CoA-independent, it can reshuffle molecular species within a single phospholipid class. Redistributes fatty acids between MLCL, CL, and other lipids, which prolongs the half-life of CL. Its action is completely reversible, which allows for cyclic changes, such as fission and fusion or bending and flattening of the membrane. Hence, by contributing to the flexibility of the lipid composition, it plays an important role in the dynamics of mitochondria membranes. Essential for the final stage of spermatogenesis, spermatid individualization. Required for the initiation of mitophagy. In Saccharomyces cerevisiae (strain ATCC 204508 / S288c) (Baker's yeast), this protein is Tafazzin (TAZ1).